The primary structure comprises 406 residues: 4-O-methyl-glucuronoyl methylesterase (406 aa).

Positions 1-17 are cleaved as a signal peptide; it reads MAFRWLSFLLLALPVLA. Residues Cys31 and Cys64 are joined by a disulfide bond. 4 N-linked (GlcNAc...) asparagine glycosylation sites follow: Asn100, Asn110, Asn122, and Asn178. A GXSYXG catalytic site motif motif is present at residues 215–220; the sequence is GCSRDG. 2 disulfides stabilise this stretch: Cys216/Cys352 and Cys248/Cys324. The active-site Nucleophile is the Ser217. Residues Lys221, Gln263, and Glu271 each contribute to the substrate site. Asn285 is a glycosylation site (N-linked (GlcNAc...) asparagine). Trp315 lines the substrate pocket. Asn348 carries an N-linked (GlcNAc...) asparagine glycan. His351 (proton donor/acceptor) is an active-site residue. Asn376, Asn387, and Asn398 each carry an N-linked (GlcNAc...) asparagine glycan.

It belongs to the carbohydrate esterase 15 (CE15) family.

It localises to the secreted. It carries out the reaction a 4-O-methyl-alpha-D-glucuronosyl ester derivative + H2O = 4-O-methyl-alpha-D-glucuronate derivative + an alcohol + H(+). In terms of biological role, glucuronoyl esterase which may play a significant role in biomass degradation, as it is considered to disconnect hemicellulose from lignin through the hydrolysis of the ester bond between 4-O-methyl-D-glucuronic acid residues of glucuronoxylans and aromatic alcohols of lignin. In Phanerochaete carnosa (strain HHB-10118-sp) (White-rot fungus), this protein is 4-O-methyl-glucuronoyl methylesterase.